A 3625-amino-acid chain; its full sequence is Spectinabilin polyketide synthase system protein NorA' (3625 aa).

The region spanning 33 to 459 is the Ketosynthase family 3 (KS3) 1 domain; that stretch reads REPVAVVSMA…GTNAHVILEQ (427 aa). Active-site for beta-ketoacyl synthase 1 activity residues include cysteine 206, histidine 341, and histidine 381. Residues 564 to 881 enclose the Malonyl-CoA:ACP transacylase (MAT) 1 domain; the sequence is LVFPGQGSQW…SLGELFAGGR (318 aa). The tract at residues 930–1054 is N-terminal hotdog fold 1; that stretch reads HPWWGAVTEL…GTLTRTARPA (125 aa). The 271-residue stretch at 930 to 1200 folds into the PKS/mFAS DH 1 domain; that stretch reads HPWWGAVTEL…VRPLTPGSGA (271 aa). The active-site Proton acceptor; for dehydratase activity 1 is the histidine 962. The interval 1066–1200 is C-terminal hotdog fold 1; it reads ADPLPVDRIY…VRPLTPGSGA (135 aa). Residue aspartate 1125 is the Proton donor; for dehydratase activity 1 of the active site. In terms of domain architecture, Ketoreductase (KR) 1 spans 1443 to 1620; it reads GTVLVTGAAG…LSLAWGLWAE (178 aa). The 76-residue stretch at 1722 to 1797 folds into the Carrier 1 domain; sequence GAVLETVRAQ…SLAAHLLGRL (76 aa). At serine 1757 the chain carries O-(pantetheine 4'-phosphoryl)serine. The Ketosynthase family 3 (KS3) 2 domain occupies 1815 to 2231; it reads DEPIAIIGMA…GTNAHVVLEQ (417 aa). Active-site for beta-ketoacyl synthase 2 activity residues include cysteine 1978, histidine 2113, and histidine 2153. One can recognise a Malonyl-CoA:ACP transacylase (MAT) 2 domain in the interval 2336–2656; the sequence is VFVFPGQGAQ…VAEAHTRGIA (321 aa). The N-terminal hotdog fold 2 stretch occupies residues 2704–2829; the sequence is HPLLGARMEL…GLLSEEEPAT (126 aa). The PKS/mFAS DH 2 domain maps to 2704–2981; sequence HPLLGARMEL…ARPVPAGQLR (278 aa). Histidine 2736 serves as the catalytic Proton acceptor; for dehydratase activity 2. Positions 2842–2981 are C-terminal hotdog fold 2; the sequence is AEPIELVGFY…ARPVPAGQLR (140 aa). Aspartate 2903 functions as the Proton donor; for dehydratase activity 2 in the catalytic mechanism. Residues 3182–3361 form the Ketoreductase (KR) 2 domain; it reads GTVLITGASG…QSLAWGLWSE (180 aa). Positions 3462-3537 constitute a Carrier 2 domain; sequence RQLTDLVRAQ…ALAGHLSTRL (76 aa). Serine 3497 is modified (O-(pantetheine 4'-phosphoryl)serine).

In terms of assembly, the spectinabilin polyketide synthase complex is composed of 4 proteins, NorA, NorA', NorB and NorC. The complex comprises 6 modules with a total of 28 catalytic domains catalyzing 7 chain elongations. NorA comprises one module, NorA' two modules, NorB one module and NorC two modules. The cofactor is pantetheine 4'-phosphate.

The enzyme catalyses 4-nitrobenzoyl-CoA + 6 (S)-methylmalonyl-CoA + malonyl-CoA + 6 NADPH + 12 H(+) = demethyldeoxyspectinabilin + 7 CO2 + 6 NADP(+) + 8 CoA + 5 H2O. It functions in the pathway antibiotic biosynthesis. It participates in polyketide biosynthesis. Component of a type I modular polyketide synthase (PKS) that generates the backbone of the antibiotic spectinabilin (also known as neoaureothin), a nitroaryl-substituted polyketide metabolite. This PKS system accepts the unusual starter unit 4-nitrobenzoyl-CoA and extends it by 6 molecules of (S)-methylmalonyl-CoA and a single molecule of malonyl-CoA. The protein is Spectinabilin polyketide synthase system protein NorA' of Streptomyces orinoci (Streptoverticillium orinoci).